A 617-amino-acid polypeptide reads, in one-letter code: Zinc finger protein 221 (617 aa).

A KRAB domain is found at 30 to 100 (VTFKDVAVVF…KTTSQREGNS (71 aa)). C2H2-type zinc fingers lie at residues 170–192 (YRCN…QQSH), 198–220 (HTCG…QRVH), and 226–248 (YKCD…QRVH). The C2H2-type 4; degenerate zinc-finger motif lies at 254–276 (FKCGQCGKGFHSRSALNVHCKLH). 11 C2H2-type zinc fingers span residues 282–304 (YNCE…QRIH), 310–332 (FKCD…SMVH), 338–360 (FRCD…SMVH), 366–388 (YKCE…QMVH), 394–416 (YNCK…QQVH), 422–444 (FKCE…QRSH), 450–472 (YNCE…QRVH), 478–500 (YNCK…QRLH), 506–528 (FKCE…QTCH), 534–556 (YKCE…QRVH), and 562–584 (YNCK…QRLH).

It belongs to the krueppel C2H2-type zinc-finger protein family.

It localises to the nucleus. May be involved in transcriptional regulation. This is Zinc finger protein 221 (ZNF221) from Homo sapiens (Human).